Reading from the N-terminus, the 199-residue chain is Regulator of G-protein signaling 16 (199 aa).

Residues C2 and C12 are each lipidated (S-palmitoyl cysteine). Residues 64–180 (SFQSLLNSKN…LKSPAYRDLA (117 aa)) enclose the RGS domain. Phosphotyrosine is present on residues Y167 and Y176.

As to quaternary structure, interacts with GNAI1 and GNAQ. Interacts with GNAI3, GNAI3 and GNAO1. Post-translationally, palmitoylated on Cys-2 and/or Cys-12. In terms of processing, phosphorylated. Phosphorylation at Tyr-167 by EGFR enhances GTPase accelerating (GAP) activity toward GNAI1. In terms of tissue distribution, predominantly found in the retina. Some expression has been found in the liver.

The protein resides in the membrane. Regulates G protein-coupled receptor signaling cascades. Inhibits signal transduction by increasing the GTPase activity of G protein alpha subunits, thereby driving them into their inactive GDP-bound form. Plays an important role in the phototransduction cascade by regulating the lifetime and effective concentration of activated transducin alpha. May regulate extra and intracellular mitogenic signals. This chain is Regulator of G-protein signaling 16 (Rgs16), found in Rattus norvegicus (Rat).